Here is a 262-residue protein sequence, read N- to C-terminus: MSGGGNTITAVGGGGGGCGGGGSSGGGGSSGGGGGGPCGACKFLRRKCVPGCIFAPYFDSEQGSAYFAAVHKVFGASNVSKLLLHIPVHRRSDAVVTICYEAQARIRDPIYGCVAHIFALQQQVVNLQAEVSYLQAHLASLELPQPQTRPQPMPQPQPLFFTPPPPLAITDLPASVSPLPSTYDLASIFDQTTSSSAWATQQRRFIDPRHQYGVSSSSSSVAVGLGGENSHDLQALAHELLHRQGSPPPAATDHSPSRTMSR.

Residues 36-138 (GPCGACKFLR…AEVSYLQAHL (103 aa)) form the LOB domain. A disordered region spans residues 223-262 (VGLGGENSHDLQALAHELLHRQGSPPPAATDHSPSRTMSR).

This sequence belongs to the LOB domain-containing protein family. Homodimer and heterodimer with LBD16. Interacts with GIP1. Expressed in roots, stems, leaves and flowers. Expressed in vascular tissues of hypocotyls, leaves, roots, developing floral organs and siliques.

Its subcellular location is the nucleus. Its function is as follows. Involved in the positive regulation of tracheary element (TE) differentiation. Involved in a positive feedback loop that maintains or promotes NAC030/VND7 expression that regulates TE differentiation-related genes. Functions in the initiation and emergence of lateral roots, in conjunction with LBD16, downstream of ARF7 and ARF19. Transcriptional activator that directly regulates EXPA14, a gene encoding a cell wall-loosening factor that promotes lateral root emergence. Activates EXPA14 by directly binding to a specific region of its promoter. Transcriptional activator that directly regulates EXPA17, a gene encoding a cell wall-loosening factor that promotes lateral root emergence. Acts downstream of the auxin influx carriers AUX1 and LAX1 in the regulation of lateral root initiation and development. The polypeptide is LOB domain-containing protein 18 (LBD18) (Arabidopsis thaliana (Mouse-ear cress)).